Here is a 532-residue protein sequence, read N- to C-terminus: Putative sodium-dependent excitatory amino acid transporter glt-3 (532 aa).

The Cytoplasmic segment spans residues 1–5 (MGMKK). A run of 3 helical transmembrane segments spans residues 6 to 26 (DLLLVLTIESVVLGVVLGFVI), 46 to 66 (FMQIVEMMILPLIMSSVISAL), and 83 to 103 (IYYMITTFLATFTGIILVSSI). The Extracellular portion of the chain corresponds to 104-181 (HPGDPELIHE…SEVLHKQTLT (78 aa)). Residues N164 and N169 are each glycosylated (N-linked (GlcNAc...) asparagine). Transmembrane regions (helical) follow at residues 182–202 (YTNEMNVLGLIVFCSGFGIIL), 222–242 (IIMRWISALMWCYPIGILSLV), 264–284 (VTVICGLMIHSLLTLPLLYFL), 352–372 (AVAVIFIAQLHNIKLSLMDLV), and 383–402 (IGSGSVPAGLDTIVIVLTTV).

It belongs to the dicarboxylate/amino acid:cation symporter (DAACS) (TC 2.A.23) family.

The protein resides in the membrane. This chain is Putative sodium-dependent excitatory amino acid transporter glt-3 (glt-3), found in Caenorhabditis elegans.